Consider the following 216-residue polypeptide: ATP-dependent dethiobiotin synthetase BioD (216 aa).

13 to 18 (EVGKTY) serves as a coordination point for ATP. T17 serves as a coordination point for Mg(2+). K38 is an active-site residue. Residue T42 coordinates substrate. ATP contacts are provided by residues D47 and 112-115 (EGVG). 2 residues coordinate Mg(2+): D47 and E112.

It belongs to the dethiobiotin synthetase family. As to quaternary structure, homodimer. Requires Mg(2+) as cofactor.

It localises to the cytoplasm. It carries out the reaction (7R,8S)-7,8-diammoniononanoate + CO2 + ATP = (4R,5S)-dethiobiotin + ADP + phosphate + 3 H(+). Its pathway is cofactor biosynthesis; biotin biosynthesis; biotin from 7,8-diaminononanoate: step 1/2. In terms of biological role, catalyzes a mechanistically unusual reaction, the ATP-dependent insertion of CO2 between the N7 and N8 nitrogen atoms of 7,8-diaminopelargonic acid (DAPA, also called 7,8-diammoniononanoate) to form a ureido ring. This Endomicrobium trichonymphae protein is ATP-dependent dethiobiotin synthetase BioD.